A 424-amino-acid chain; its full sequence is Microcin H47 secretion protein MchE (424 aa).

The Cytoplasmic segment spans residues 1–25 (MFRQDALENRKMKWQGRAILLPGIP). Residues 26–46 (LWLIMLGSIVFITAFLMFIIV) form a helical membrane-spanning segment. Topologically, residues 47–424 (GTYSRRVNVS…KHSATGPLND (378 aa)) are periplasmic.

Belongs to the membrane fusion protein (MFP) (TC 8.A.1) family.

Its subcellular location is the cell inner membrane. Functionally, probably involved, in conjunction with MchF, in the secretion of microcin H47. The chain is Microcin H47 secretion protein MchE (mchE) from Escherichia coli.